Consider the following 257-residue polypeptide: UPF0246 protein LPC_0782 (257 aa).

Belongs to the UPF0246 family.

The sequence is that of UPF0246 protein LPC_0782 from Legionella pneumophila (strain Corby).